The chain runs to 129 residues: Glycine cleavage system H protein (129 aa).

The region spanning 24-106 (HAVVGITDFA…YDGGWLFKLA (83 aa)) is the Lipoyl-binding domain. An N6-lipoyllysine modification is found at Lys65.

The protein belongs to the GcvH family. As to quaternary structure, the glycine cleavage system is composed of four proteins: P, T, L and H. The cofactor is (R)-lipoate.

In terms of biological role, the glycine cleavage system catalyzes the degradation of glycine. The H protein shuttles the methylamine group of glycine from the P protein to the T protein. This chain is Glycine cleavage system H protein, found in Hydrogenovibrio crunogenus (strain DSM 25203 / XCL-2) (Thiomicrospira crunogena).